The primary structure comprises 57 residues: Large ribosomal subunit protein bL32 (57 aa).

Residues 1–20 (MAVPKKKTSKGKRNQRHAVW) show a composition bias toward basic residues. The segment at 1 to 23 (MAVPKKKTSKGKRNQRHAVWKAK) is disordered.

The protein belongs to the bacterial ribosomal protein bL32 family.

The protein is Large ribosomal subunit protein bL32 of Prochlorococcus marinus (strain SARG / CCMP1375 / SS120).